The primary structure comprises 303 residues: Regulatory protein PocR (303 aa).

The HTH araC/xylS-type domain maps to 195–293 (KKALRYIDAH…QVTPQAYRQQ (99 aa)). DNA-binding regions (H-T-H motif) lie at residues 212-233 (EDVASHVYLSPYYFSKLFKKYQ) and 260-283 (IASIARNLGFSQTSYFCKVFRQTY).

Its pathway is cofactor biosynthesis; adenosylcobalamin biosynthesis [regulation]. It functions in the pathway polyol metabolism; 1,2-propanediol degradation [regulation]. Positive regulatory protein of pdu and cob operons. Positively autoregulates its own expression. The chain is Regulatory protein PocR (pocR) from Salmonella typhimurium (strain LT2 / SGSC1412 / ATCC 700720).